Reading from the N-terminus, the 242-residue chain is Type III pantothenate kinase (242 aa).

D7–K14 provides a ligand contact to ATP. Residues Y91 and G98–R101 each bind substrate. D100 functions as the Proton acceptor in the catalytic mechanism. T121 provides a ligand contact to ATP. T171 contributes to the substrate binding site.

This sequence belongs to the type III pantothenate kinase family. As to quaternary structure, homodimer. Requires NH4(+) as cofactor. K(+) serves as cofactor.

The protein localises to the cytoplasm. The catalysed reaction is (R)-pantothenate + ATP = (R)-4'-phosphopantothenate + ADP + H(+). Its pathway is cofactor biosynthesis; coenzyme A biosynthesis; CoA from (R)-pantothenate: step 1/5. In terms of biological role, catalyzes the phosphorylation of pantothenate (Pan), the first step in CoA biosynthesis. This Xylella fastidiosa (strain 9a5c) protein is Type III pantothenate kinase.